Consider the following 336-residue polypeptide: MSKHFFLHNEFHWQGRHDAEDGAAGSRVHHVVQQIDYTHIGENPYGVALLGFACDAGVARNKGRIGAKKSPDLIRRALANLAWHSPHPLYDLGTVVCDDDLLESSQQHCAKIIAEVLPCVPVITLGGGHEVAWASFSGLARYFEQHHPEKAPKIGIINFDAHFDLRAFSSSQADVKPSSGTPFNQIQHYCQQQGWDFHYACLGVSKASNTRALFERAEQLNVWFVEDKDLGSVNHDYHLTQLQHFIDDCDYLYLTIDLDVFPAATAPGVSAPAARGVSYDNLAPFLDRILAHRDKLMLADIAEYNPTYDVDSQTARLAARLCWDIANAMNDKLEHQ.

Mn(2+)-binding residues include H129, D160, H162, D164, D257, and D259.

This sequence belongs to the arginase family. Requires Mn(2+) as cofactor.

The catalysed reaction is N-formimidoyl-L-glutamate + H2O = formamide + L-glutamate. The protein operates within amino-acid degradation; L-histidine degradation into L-glutamate; L-glutamate from N-formimidoyl-L-glutamate (hydrolase route): step 1/1. Functionally, catalyzes the conversion of N-formimidoyl-L-glutamate to L-glutamate and formamide. The polypeptide is Formimidoylglutamase (Vibrio vulnificus (strain YJ016)).